Consider the following 533-residue polypeptide: Quinate permease (533 aa).

Over 1-21 the chain is Cytoplasmic; the sequence is MSILALVEDRPTPREVYNWRV. A helical membrane pass occupies residues 22–42; that stretch reads YLLAAVASFTSCMIGYDSAFI. Over 43–67 the chain is Extracellular; the sequence is GTTLSLQSFQNEFNWESLNTDLISA. A helical membrane pass occupies residues 68 to 88; it reads NIVSLYQAGAFFGALFAYPIG. Residues 89 to 94 lie on the Cytoplasmic side of the membrane; the sequence is HFWGRR. Residues 95 to 115 form a helical membrane-spanning segment; the sequence is WGLMFSALIFFLGAGMMLGAN. The Extracellular portion of the chain corresponds to 116–127; that stretch reads GDRGLGLIYGGR. Residues 128–148 traverse the membrane as a helical segment; it reads VLAGIGVGAGSNICPIYISEM. The Cytoplasmic segment spans residues 149–156; that stretch reads APPAIRGR. The helical transmembrane segment at 157–177 threads the bilayer; it reads LVGVYELGWQIGGVVGFWINY. Residues 178–191 lie on the Extracellular side of the membrane; sequence GVDETLAPSHKQWI. A helical membrane pass occupies residues 192–212; sequence IPFAVQLIPAGLLIIGALLIR. Over 213-282 the chain is Cytoplasmic; the sequence is ESPRWLFLRG…AWTNKRILYR (70 aa). Residues 283–303 form a helical membrane-spanning segment; sequence LFLGSMLFLWQNGSGINAINY. Topologically, residues 304 to 324 are extracellular; the sequence is YSPRVFKSIGVSGGNTSLLTT. The chain crosses the membrane as a helical span at residues 325 to 346; that stretch reads GIFGVVKAVITFVWLLYLIDHF. The Cytoplasmic segment spans residues 347–349; sequence GRR. Residues 350–370 form a helical membrane-spanning segment; sequence NLLLVGAAGGSVCLWIVGGYI. Residues 371-385 are Extracellular-facing; that stretch reads KIAKPENNPEGTQLD. A helical transmembrane segment spans residues 386 to 406; the sequence is SGGIAAIFFFYLWTAFYTPSW. Topologically, residues 407 to 431 are cytoplasmic; it reads NGTPWVINSEMFDPTVRSLAQACAA. A helical membrane pass occupies residues 432–452; it reads ASNWLWNFLISRFTPQMFTSM. Over 453–454 the chain is Extracellular; that stretch reads GY. A helical transmembrane segment spans residues 455 to 475; sequence GVYFFFASLMILSIVFVFFLI. The Cytoplasmic portion of the chain corresponds to 476–533; sequence PETKGVPLESMETLFDKKPVWHAHSQLIRELRENEEAFRADMGASGKGGVTKEYVEEA.

The protein belongs to the major facilitator superfamily. Sugar transporter (TC 2.A.1.1) family. In terms of assembly, interacts with creB. Post-translationally, ubiquitinated. Deubiquitinated by creB, probably to control its activity or amount.

The protein localises to the cell membrane. Integral membrane transporter that imports quinic acid to be catabolized as a carbon source. The protein is Quinate permease (qutD) of Emericella nidulans (strain FGSC A4 / ATCC 38163 / CBS 112.46 / NRRL 194 / M139) (Aspergillus nidulans).